The sequence spans 509 residues: MEEIHRYLQPDSSQQHNFLYPLIFQEYIYALAQDHGLNRNRSILLENSGYNNKFSFLIVKRLITRMDQQNHLIISTNDSNKNPFLGCNKSLYSQMISEGFACIVEIPFSIRLISSLSSFEGKKIFKSHNLRSIHSTFPFLEDNFSHLNYVLDILIPYPVHLEILVQTLRYWVKDASSLHLLRFFLHEYCNLNSLITSKKPGYSFSKKNQRFFFFLYNSYVYECESTFVFLRNQSSHLRSTSFGALLERIYFYGKIERLVEAFAKDFQVTLWLFKDPVMHYVRYEGKSILASKGTFPWMNKWKFYLVNFWQCHFSMYFNTGRIHINQLSNHSRDFMGYLSSVRLNHSMVRSQMLENSFLINNPIKKFDTLVPIIPLIGSLAKAHFCTGLGHPISKPVWSDLSDSDIIDRFGRICRNLFHYYSGSSKKKTLYRIKYILRLSCARTLARKHKSTVRTFLKRSGSELLEEFLTSEEEVLSLTFPRASSSLWGVYRSRIWYLDIFCINDLANSQ.

Belongs to the intron maturase 2 family. MatK subfamily.

The protein resides in the plastid. The protein localises to the chloroplast. Functionally, usually encoded in the trnK tRNA gene intron. Probably assists in splicing its own and other chloroplast group II introns. This is Maturase K from Solanum lycopersicum (Tomato).